Here is a 563-residue protein sequence, read N- to C-terminus: Serine palmitoyltransferase 3 (563 aa).

Residues 1–29 (MANLNDSAVTNGTLHNPKTQQGKRQSTGC) show a composition bias toward polar residues. The interval 1–32 (MANLNDSAVTNGTLHNPKTQQGKRQSTGCVKN) is disordered. The chain crosses the membrane as a helical span at residues 59 to 79 (PLYVYVLTYMGYGIGILFGYL). Residue K371 is modified to N6-(pyridoxal phosphate)lysine.

It belongs to the class-II pyridoxal-phosphate-dependent aminotransferase family. In terms of assembly, component of the serine palmitoyltransferase (SPT) complex, which is composed of SPTLC1, SPTLC2 or SPTLC3 and SPTSSA or SPTSSB. The heterodimer consisting of SPTLC1 and SPTLC2/SPTLC3 forms the catalytic core of the enzyme, while SPTSSA or SPTSSB subunits determine substrate specificity. SPT also interacts with ORMDL proteins, especially ORMDL3, which negatively regulate SPT activity in the presence of ceramides. Pyridoxal 5'-phosphate is required as a cofactor. As to expression, expressed in white and brown adipose tissues.

It localises to the endoplasmic reticulum membrane. It carries out the reaction L-serine + hexadecanoyl-CoA + H(+) = 3-oxosphinganine + CO2 + CoA. The enzyme catalyses dodecanoyl-CoA + L-serine + H(+) = 3-oxotetradecasphinganine + CO2 + CoA. It catalyses the reaction tetradecanoyl-CoA + L-serine + H(+) = 3-oxohexadecasphinganine + CO2 + CoA. The catalysed reaction is octadecanoyl-CoA + L-serine + H(+) = 3-oxoeicosasphinganine + CO2 + CoA. It participates in lipid metabolism; sphingolipid metabolism. With respect to regulation, SPT complex catalytic activity is negatively regulated by ORMDL proteins, including ORMDL3, in the presence of ceramides. This mechanism allows to maintain ceramide levels at sufficient concentrations for the production of complex sphingolipids, but which prevents the accumulation of ceramides to levels that trigger apoptosis. Component of the serine palmitoyltransferase multisubunit enzyme (SPT) that catalyzes the initial and rate-limiting step in sphingolipid biosynthesis by condensing L-serine and activated acyl-CoA (most commonly palmitoyl-CoA) to form long-chain bases. The SPT complex is composed of SPTLC1, SPTLC2 or SPTLC3 and SPTSSA or SPTSSB. Within this complex, the heterodimer consisting of SPTLC1 and SPTLC2/SPTLC3 forms the catalytic core. The composition of the serine palmitoyltransferase (SPT) complex determines the substrate preference. The SPTLC1-SPTLC2-SPTSSA complex shows a strong preference for C16-CoA substrate, while the SPTLC1-SPTLC3-SPTSSA isozyme uses both C14-CoA and C16-CoA as substrates, with a slight preference for C14-CoA. The SPTLC1-SPTLC2-SPTSSB complex shows a strong preference for C18-CoA substrate, while the SPTLC1-SPTLC3-SPTSSB isozyme displays an ability to use a broader range of acyl-CoAs, without apparent preference. This is Serine palmitoyltransferase 3 from Mus musculus (Mouse).